The following is a 407-amino-acid chain: Histone acetyltransferase mst2 (407 aa).

Residues 98 to 372 (PQPTSIRYLY…VNPKLLRWTP (275 aa)) form the MYST-type HAT domain. The C2HC MYST-type zinc finger occupies 131–156 (LYICESCLKYMNSDHVLQRHKMKCSW). Lys198 bears the N6-acetyllysine; by autocatalysis mark. Residues 241–243 (ILT), Thr243, and 248–254 (QRRGYGV) contribute to the acetyl-CoA site. The active-site Proton donor/acceptor is the Glu274. Acetyl-CoA-binding residues include Ser278 and Ser287.

This sequence belongs to the MYST (SAS/MOZ) family. Component of the mst2 complex composed of at least eaf6, mst2, nto1, pdp3, ptf1, ptf2 and tfg3. Autoacetylation at Lys-198 is required for proper function.

The protein localises to the cytoplasm. It is found in the nucleus. The catalysed reaction is L-lysyl-[protein] + acetyl-CoA = N(6)-acetyl-L-lysyl-[protein] + CoA + H(+). Functionally, component of the mst2 complex which is a highly specific H3 lysine 14 (H3K14) acetyltransferase that functions together with gcn5 to regulate global levels of H3K14 acetylation (H3K14ac), critical for DNA damage checkpoint activation. Negatively regulates telomere silencing. Telomere silencing is increased due to histone hypoacetylation and/or an increase in the ratio of methylated histones to acetylated histones. Telomeric histone acetylation contributes to normal meiotic progression. This Schizosaccharomyces pombe (strain 972 / ATCC 24843) (Fission yeast) protein is Histone acetyltransferase mst2 (mst2).